An 83-amino-acid polypeptide reads, in one-letter code: Mitochondrial import inner membrane translocase subunit Tim8 (83 aa).

The Twin CX3C motif motif lies at 35-60 (CWDVCFADYRPPSKMDGKTQTCIQNC). 2 cysteine pairs are disulfide-bonded: C35/C60 and C39/C56.

Belongs to the small Tim family. Heterohexamer; composed of 3 copies of ddp-1/tim-8 and 3 copies of tin-13/tim-13, named soluble 70 kDa complex. Associates with the TIM22 complex, whose core is composed of tim-22.

It localises to the mitochondrion inner membrane. Functionally, mitochondrial intermembrane chaperone that participates in the import and insertion of some multi-pass transmembrane proteins into the mitochondrial inner membrane. Also required for the transfer of beta-barrel precursors from the TOM complex to the sorting and assembly machinery (SAM complex) of the outer membrane. Acts as a chaperone-like protein that protects the hydrophobic precursors from aggregation and guide them through the mitochondrial intermembrane space. The ddp-1/tim-8-tim-13 complex mediates the import of some proteins while the predominant tim-9/tin-9.1-tim-10/tin-10 70 kDa complex mediates the import of much more proteins. The sequence is that of Mitochondrial import inner membrane translocase subunit Tim8 from Caenorhabditis elegans.